The sequence spans 329 residues: tRNA (guanine(10)-N2)-dimethyltransferase (329 aa).

Residues 40–143 (NVENVEIFER…KLWIGIRIRE (104 aa)) form the THUMP domain.

Belongs to the methyltransferase superfamily. Trm-G10 family. In terms of assembly, monomer.

The protein resides in the cytoplasm. It carries out the reaction guanosine(10) in tRNA + 2 S-adenosyl-L-methionine = N(2)-dimethylguanosine(10) in tRNA + 2 S-adenosyl-L-homocysteine + 2 H(+). Catalyzes the adenosylmethionine-dependent methylation of the exocyclic amino group (N(2)) of guanosine at position 10 of various tRNAs. Acts via a two-step process that leads to the formation of either N(2)-monomethyl (m(2)G) or N(2)-dimethylguanosine (m(2)(2)G). This chain is tRNA (guanine(10)-N2)-dimethyltransferase (trmG10), found in Pyrococcus abyssi (strain GE5 / Orsay).